A 64-amino-acid polypeptide reads, in one-letter code: Prokaryotic ubiquitin-like protein UBact (64 aa).

2 stretches are compositionally biased toward basic and acidic residues: residues 1-12 and 33-64; these read MSDLFRMEERRQ and PDVKRPDTSDLLRRMKRVDPDAARRYRQRSGE. A disordered region spans residues 1–64; it reads MSDLFRMEER…ARRYRQRSGE (64 aa). E64 is covalently cross-linked (Isoglutamyl lysine isopeptide (Glu-Lys) (interchain with K-? in acceptor proteins)).

It belongs to the ubiquitin-like protein UBact family.

In terms of biological role, may function as a protein modifier covalently attached to lysine residues of substrate proteins. This may serve to target the modified proteins for degradation by proteasomes. The chain is Prokaryotic ubiquitin-like protein UBact from Chthonomonas calidirosea (strain DSM 23976 / ICMP 18418 / T49).